A 480-amino-acid chain; its full sequence is Bifunctional protein HldE (480 aa).

Residues 1–316 are ribokinase; the sequence is MNMHDFSKTK…EQLNASMRHQ (316 aa). ATP is bound at residue 192–195; that stretch reads NQGE. The active site involves D261. Positions 342–480 are cytidylyltransferase; it reads FTNGCFDLLH…EAEIKEGAAQ (139 aa).

This sequence in the N-terminal section; belongs to the carbohydrate kinase PfkB family. In the C-terminal section; belongs to the cytidylyltransferase family. In terms of assembly, homodimer.

The catalysed reaction is D-glycero-beta-D-manno-heptose 7-phosphate + ATP = D-glycero-beta-D-manno-heptose 1,7-bisphosphate + ADP + H(+). It carries out the reaction D-glycero-beta-D-manno-heptose 1-phosphate + ATP + H(+) = ADP-D-glycero-beta-D-manno-heptose + diphosphate. Its pathway is nucleotide-sugar biosynthesis; ADP-L-glycero-beta-D-manno-heptose biosynthesis; ADP-L-glycero-beta-D-manno-heptose from D-glycero-beta-D-manno-heptose 7-phosphate: step 1/4. It participates in nucleotide-sugar biosynthesis; ADP-L-glycero-beta-D-manno-heptose biosynthesis; ADP-L-glycero-beta-D-manno-heptose from D-glycero-beta-D-manno-heptose 7-phosphate: step 3/4. In terms of biological role, catalyzes the phosphorylation of D-glycero-D-manno-heptose 7-phosphate at the C-1 position to selectively form D-glycero-beta-D-manno-heptose-1,7-bisphosphate. Functionally, catalyzes the ADP transfer from ATP to D-glycero-beta-D-manno-heptose 1-phosphate, yielding ADP-D-glycero-beta-D-manno-heptose. The chain is Bifunctional protein HldE from Hydrogenovibrio crunogenus (strain DSM 25203 / XCL-2) (Thiomicrospira crunogena).